The sequence spans 432 residues: MGNNVVVLGTQWGDEGKGKIVDLLTERAKYVVRYQGGHNAGHTLVINGEKTVLHLIPSGILRENVTSIIGNGVVLSPAALMKEMKELEDRGIPVRERLLLSEACPLILDYHVALDNAREKARGAKAIGTTGRGIGPAYEDKVARRGLRVGDLFDKETFAEKLKEVMEYHNFQLVNYYKAEAVDYQKVLDDTMAVADILTSMVVDVSDLLDQARQRGDFVMFEGAQGTLLDIDHGTYPYVTSSNTTAGGVATGSGLGPRYVDYVLGILKAYSTRVGAGPFPAELFDETGEFLCKQGNEFGATTGRRRRTGWLDTVAVRRAVQLNSLSGFCLTKLDVLDGLKEVKLCVAYRMPDGREVTTTPLAADDWKGVEPIYETMPGWSESTFGVKDRSGLPQAALNYIKRIEELTGVPIDIISTGPDRTETMILRDPFDA.

GTP is bound by residues 13-19 (GDEGKGK) and 41-43 (GHT). Catalysis depends on D14, which acts as the Proton acceptor. D14 and G41 together coordinate Mg(2+). IMP is bound by residues 14 to 17 (DEGK), 39 to 42 (NAGH), T130, R144, Q225, T240, and R304. Catalysis depends on H42, which acts as the Proton donor. Position 300–306 (300–306 (ATTGRRR)) interacts with substrate. GTP is bound by residues R306, 332–334 (KLD), and 415–417 (STG).

This sequence belongs to the adenylosuccinate synthetase family. In terms of assembly, homodimer. Requires Mg(2+) as cofactor.

It is found in the cytoplasm. It carries out the reaction IMP + L-aspartate + GTP = N(6)-(1,2-dicarboxyethyl)-AMP + GDP + phosphate + 2 H(+). Its pathway is purine metabolism; AMP biosynthesis via de novo pathway; AMP from IMP: step 1/2. In terms of biological role, plays an important role in the de novo pathway of purine nucleotide biosynthesis. Catalyzes the first committed step in the biosynthesis of AMP from IMP. The chain is Adenylosuccinate synthetase from Shigella flexneri serotype 5b (strain 8401).